The sequence spans 344 residues: Golgi-associated RAB2 interactor protein 1B (344 aa).

The interval 271–293 is disordered; sequence FRSSRKVETNKNSSGKDSSREDS.

It belongs to the GARIN family.

It is found in the golgi apparatus. In terms of biological role, RAB2B effector protein required for accurate acrosome formation and normal male fertility. In complex with RAB2A/RAB2B, seems to suppress excessive vesicle trafficking during acrosome formation. The polypeptide is Golgi-associated RAB2 interactor protein 1B (Homo sapiens (Human)).